A 311-amino-acid polypeptide reads, in one-letter code: Nuclear hormone receptor family member nhr-111 (311 aa).

A DNA-binding region (nuclear receptor) is located at residues 39–115; sequence ITLCAVCGDT…KGMNKNAVQP (77 aa). NR C4-type zinc fingers lie at residues 42 to 62 and 78 to 98; these read CAVC…CFGC and CWNG…CKSC. Residues 116-311 form the NR LBD domain; the sequence is ERTSHSYTVE…KACEIVISFL (196 aa).

Belongs to the nuclear hormone receptor family.

It localises to the nucleus. Its function is as follows. Orphan nuclear receptor. In Caenorhabditis elegans, this protein is Nuclear hormone receptor family member nhr-111 (nhr-111).